Consider the following 522-residue polypeptide: Hydroxymethylglutaryl-CoA synthase, cytoplasmic (522 aa).

Positions 43 and 44 each coordinate (3S)-3-hydroxy-3-methylglutaryl-CoA. The active-site Proton donor/acceptor is E95. Residues C129, N167, T171, S221, H264, K273, N344, and S378 each contribute to the (3S)-3-hydroxy-3-methylglutaryl-CoA site. C129 acts as the Acyl-thioester intermediate in catalysis. The active-site Proton donor/acceptor is the H264.

It belongs to the thiolase-like superfamily. HMG-CoA synthase family. In terms of assembly, homodimer.

It is found in the cytoplasm. It catalyses the reaction acetoacetyl-CoA + acetyl-CoA + H2O = (3S)-3-hydroxy-3-methylglutaryl-CoA + CoA + H(+). It participates in metabolic intermediate biosynthesis; (R)-mevalonate biosynthesis; (R)-mevalonate from acetyl-CoA: step 2/3. In terms of biological role, catalyzes the condensation of acetyl-CoA with acetoacetyl-CoA to form HMG-CoA, which is converted by HMG-CoA reductase (HMGCR) into mevalonate, a precursor for cholesterol synthesis. This is Hydroxymethylglutaryl-CoA synthase, cytoplasmic (HMGCS1) from Gallus gallus (Chicken).